A 262-amino-acid polypeptide reads, in one-letter code: MRELRSSSFWRAILAEFLGSLLYTLLGLGASLRWAPGPHGVLGSALAFGLAQATLVQALGHVSGGHINPAITLAFLLASQLSLPRALGYLLAQLLGALAGAGVLYGVTPAAVRGTLGLSALHPSVGPGQGTVVELLLTAQFILCVFASFDDRHDGRPGSAALPVGFSLALGHLFGIPFTGAGMNPARSFAPAVITRNFTNHWVFWAGPLLGAALAALLYELALCPRARSMAERLAVLRGEPPAAAPPPEPPAEPLELKTQGL.

At 1–9 the chain is on the cytoplasmic side; it reads MRELRSSSF. A helical transmembrane segment spans residues 10–29; the sequence is WRAILAEFLGSLLYTLLGLG. Residues 30 to 41 lie on the Extracellular side of the membrane; sequence ASLRWAPGPHGV. The helical transmembrane segment at 42-59 threads the bilayer; the sequence is LGSALAFGLAQATLVQAL. Over 60-61 the chain is Cytoplasmic; the sequence is GH. Residues 62 to 77 constitute an intramembrane region (discontinuously helical); the sequence is VSGGHINPAITLAFLL. The NPA 1 motif lies at 68–70; sequence NPA. The Cytoplasmic segment spans residues 78–82; the sequence is ASQLS. Residues 83 to 106 traverse the membrane as a helical segment; the sequence is LPRALGYLLAQLLGALAGAGVLYG. The Extracellular segment spans residues 107–127; the sequence is VTPAAVRGTLGLSALHPSVGP. Residues 128–148 form a helical membrane-spanning segment; the sequence is GQGTVVELLLTAQFILCVFAS. The Cytoplasmic segment spans residues 149–156; that stretch reads FDDRHDGR. The chain crosses the membrane as a helical span at residues 157–175; the sequence is PGSAALPVGFSLALGHLFG. At 176–178 the chain is on the extracellular side; that stretch reads IPF. The segment at residues 179–193 is an intramembrane region (discontinuously helical); the sequence is TGAGMNPARSFAPAV. The short motif at 184–186 is the NPA 2 element; the sequence is NPA. Over 194 to 200 the chain is Extracellular; it reads ITRNFTN. A helical transmembrane segment spans residues 201-222; that stretch reads HWVFWAGPLLGAALAALLYELA. At 223-262 the chain is on the cytoplasmic side; it reads LCPRARSMAERLAVLRGEPPAAAPPPEPPAEPLELKTQGL. Positions 227 to 237 are interaction with CALM; sequence ARSMAERLAVL. The disordered stretch occupies residues 240-262; the sequence is EPPAAAPPPEPPAEPLELKTQGL. The segment covering 243–253 has biased composition (pro residues); sequence AAAPPPEPPAE.

It belongs to the MIP/aquaporin (TC 1.A.8) family. Homotetramer; each monomer provides an independent water pore. Two homotetramers on opposing membranes can dimerize, forming a cell-cell junction. Interacts with CALM; the calcium-calmodulin/CALM complex interacts with the cytoplasmic domains of two aquaporins, leading to channel closure. During early stages of lens development, interacts through its C-terminal region with Cx56 and GJA8/Cx45.6. Major component of lens fiber gap junctions.

The protein localises to the cell membrane. It is found in the cell junction. The catalysed reaction is H2O(in) = H2O(out). Its activity is regulated as follows. The water channel activity is inhibited by calcium through calmodulin/CALM. Its function is as follows. Aquaporins form homotetrameric transmembrane channels, with each monomer independently mediating water transport across the plasma membrane along its osmotic gradient. Specifically expressed in lens fiber cells, this aquaporin is crucial for maintaining lens water homeostasis and transparency. Beyond water permeability, it also acts as a cell-to-cell adhesion molecule, forming thin junctions between lens fiber cells that are essential for maintaining the ordered structure and transparency of the lens. The chain is Lens fiber major intrinsic protein from Gallus gallus (Chicken).